We begin with the raw amino-acid sequence, 682 residues long: MSRKQLALFEPVLLVQALTDAVKKLSPRAQWRNPVMFVVWAGSVLTTLLTLAMVTGQIAGSALFTGIISLWLWFTVLFANFAEALAEGRSKAQANSLKGVKKTAFARRLRAPRHDAQADNVPAAELRKGDIVLVKAGDIIPCDGEVIEGGASVDESAITGESAPVIRESGGDFASVTGGTRILSDWLVIACSVNPGETFLDRMIAMVEGAQRRKTPNEIALTILLIALTIVFLLATATLWPFSAWGGNAVSVTVLVALLVCLIPTTIGGLLSAIGVAGMSRMLGANVIATSGRAVEAAGDVDVLLLDKTGTITLGNRQASDFIPARGVDERTLADAAQLASLADETPEGRSIVILAKQRFNLRERDVQSLHATFVPFTAQSRMSGINIDNRMIRKGSVDAIRRHVESNGGHFPADVEQNVENVARLGATPLVVVEGARVLGVIALKDIVKGGIKERFAQLRKMGIKTVMITGDNRLTAAAIAAEAGVDDFLAEATPEAKLALIRQYQAEGRLVAMTGDGTNDAPALAQADVAVAMNSGTQAAKEAGNMVDLDSNPTKLIEVVHIGKQMLMTRGSLTTFSIANDVAKYFAIIPAAFAATYPQLNALNVMGLHSPNSAILSAVIFNALIIIFLIPLALKGVSYKPLSASAMLRRNLWIYGLGGLVVPFIGIKVIDVLLTLLGLA.

4 consecutive transmembrane segments (helical) span residues 34–54, 58–78, 219–239, and 254–274; these read PVMF…LAMV, IAGS…TVLF, IALT…TATL, and VLVA…LSAI. Catalysis depends on D307, which acts as the 4-aspartylphosphate intermediate. ATP contacts are provided by residues D344, E348, 377-384, and K395; that span reads FTAQSRMS. Residues D518 and D522 each contribute to the Mg(2+) site. Helical transmembrane passes span 588-608, 616-636, and 662-682; these read FAII…LNVM, AILS…PLAL, and LVVP…LGLA.

Belongs to the cation transport ATPase (P-type) (TC 3.A.3) family. Type IA subfamily. The system is composed of three essential subunits: KdpA, KdpB and KdpC.

It is found in the cell inner membrane. It catalyses the reaction K(+)(out) + ATP + H2O = K(+)(in) + ADP + phosphate + H(+). Part of the high-affinity ATP-driven potassium transport (or Kdp) system, which catalyzes the hydrolysis of ATP coupled with the electrogenic transport of potassium into the cytoplasm. This subunit is responsible for energy coupling to the transport system and for the release of the potassium ions to the cytoplasm. The chain is Potassium-transporting ATPase ATP-binding subunit from Salmonella enteritidis PT4 (strain P125109).